We begin with the raw amino-acid sequence, 354 residues long: Glutamine synthetase cytosolic isozyme 1-3 (354 aa).

At S2 the chain carries N-acetylserine. Phosphoserine occurs at positions 2 and 48. The GS beta-grasp domain occupies 19–99 (IIAEYIWIGG…VMCDAYTPAG (81 aa)). The GS catalytic domain maps to 106–354 (KRHNAAKIFS…SMIAETTILG (249 aa)).

The protein belongs to the glutamine synthetase family. In terms of assembly, homooctamer. As to expression, expressed in the pericycle in the region of mature root.

It is found in the cytoplasm. It carries out the reaction L-glutamate + NH4(+) + ATP = L-glutamine + ADP + phosphate + H(+). In terms of biological role, low-affinity glutamine synthetase. May contribute to the homeostatic control of glutamine synthesis in roots. The sequence is that of Glutamine synthetase cytosolic isozyme 1-3 (GLN1-3) from Arabidopsis thaliana (Mouse-ear cress).